The following is a 461-amino-acid chain: Gram-negative bacteria-binding protein 2 (461 aa).

The N-terminal stretch at 1-20 is a signal peptide; it reads MRWEFLPCLLLLISNNKIFG. Positions 21–115 constitute a CBM39 domain; that stretch reads FKVPSINFEM…TRVIINTRLL (95 aa). Residues Asn-71, Asn-170, Asn-177, and Asn-364 are each glycosylated (N-linked (GlcNAc...) asparagine). The GH16 domain maps to 179-461; it reads TTWKHDIRQR…VIDYVRVYAE (283 aa).

It belongs to the insect beta-1,3-glucan binding protein family.

The protein localises to the secreted. Functionally, involved in the recognition of invading microorganisms. Binds specifically to beta-1,3-glucan and activates the phenoloxidase cascade. The chain is Gram-negative bacteria-binding protein 2 from Drosophila melanogaster (Fruit fly).